Consider the following 319-residue polypeptide: Molybdenum cofactor biosynthesis bifunctional protein (319 aa).

Residues 1 to 145 (MIDVGDKAVT…GKSGHWQRPA (145 aa)) are molybdenum cofactor biosynthesis protein C. Substrate contacts are provided by residues 61–63 (LCH) and 99–100 (ME). The active site involves D114. The molybdenum cofactor biosynthesis protein B stretch occupies residues 146 to 319 (IAPDVAPTGA…KGADHGTVKG (174 aa)).

This sequence in the N-terminal section; belongs to the MoaC family. It in the C-terminal section; belongs to the MoaB/Mog family.

The enzyme catalyses (8S)-3',8-cyclo-7,8-dihydroguanosine 5'-triphosphate = cyclic pyranopterin phosphate + diphosphate. Its pathway is cofactor biosynthesis; molybdopterin biosynthesis. In terms of biological role, catalyzes the conversion of (8S)-3',8-cyclo-7,8-dihydroguanosine 5'-triphosphate to cyclic pyranopterin monophosphate (cPMP). The sequence is that of Molybdenum cofactor biosynthesis bifunctional protein (moaCB) from Synechococcus elongatus (strain ATCC 33912 / PCC 7942 / FACHB-805) (Anacystis nidulans R2).